The primary structure comprises 65 residues: MAKSKGARIVITLECSDKAGEFAQKRKPGVFRYTTTKNRRNTPSRIELNKFCPNCNQHCIFKEIK.

The protein belongs to the bacterial ribosomal protein bL33 family.

It localises to the plastid. The protein resides in the chloroplast. This Pyropia yezoensis (Susabi-nori) protein is Large ribosomal subunit protein bL33c.